Here is a 384-residue protein sequence, read N- to C-terminus: Chaperone protein DnaJ (384 aa).

One can recognise a J domain in the interval 5–70 (DYYEVLGVSK…DKKAAYDRYG (66 aa)). The segment at 16 to 47 (ASSDDIKKGYRRKAKELHPDRNKDDPNAEAQF) is disordered. The segment covering 31-47 (ELHPDRNKDDPNAEAQF) has biased composition (basic and acidic residues). A CR-type zinc finger spans residues 143 to 221 (GLQKTINVPT…CQGAGRVEKD (79 aa)). Zn(2+) contacts are provided by Cys156, Cys159, Cys173, Cys176, Cys195, Cys198, Cys209, and Cys212. 4 CXXCXGXG motif repeats span residues 156–163 (CKTCNGSG), 173–180 (CPTCSGMG), 195–202 (CPTCSGLG), and 209–216 (CKSCQGAG).

This sequence belongs to the DnaJ family. As to quaternary structure, homodimer. The cofactor is Zn(2+).

It localises to the cytoplasm. In terms of biological role, participates actively in the response to hyperosmotic and heat shock by preventing the aggregation of stress-denatured proteins and by disaggregating proteins, also in an autonomous, DnaK-independent fashion. Unfolded proteins bind initially to DnaJ; upon interaction with the DnaJ-bound protein, DnaK hydrolyzes its bound ATP, resulting in the formation of a stable complex. GrpE releases ADP from DnaK; ATP binding to DnaK triggers the release of the substrate protein, thus completing the reaction cycle. Several rounds of ATP-dependent interactions between DnaJ, DnaK and GrpE are required for fully efficient folding. Also involved, together with DnaK and GrpE, in the DNA replication of plasmids through activation of initiation proteins. The polypeptide is Chaperone protein DnaJ (Roseobacter denitrificans (strain ATCC 33942 / OCh 114) (Erythrobacter sp. (strain OCh 114))).